Reading from the N-terminus, the 1100-residue chain is Guanylate cyclase 2G (1100 aa).

The first 43 residues, 1 to 43 (MASRARSEPPLEHRFYGGAESHAGHSSLVLTLFVVMLMTCLEA), serve as a signal peptide directing secretion. The Extracellular portion of the chain corresponds to 44–481 (AKLTVGFHAP…GAGMTASVTA (438 aa)). N-linked (GlcNAc...) asparagine glycosylation is found at Asn-55, Asn-85, Asn-94, Asn-418, and Asn-443. The chain crosses the membrane as a helical span at residues 482-502 (VIPTVTLLVVASAAAITGLML). Residues 503-1100 (WRLRGKVQNH…EEEAKVPEIL (598 aa)) lie on the Cytoplasmic side of the membrane. Positions 549–826 (STVKISADCG…PAFPSIKKTL (278 aa)) constitute a Protein kinase domain. Residues 901-1031 (TIFFSDIVGF…DTVNMASRME (131 aa)) enclose the Guanylate cyclase domain.

The protein belongs to the adenylyl cyclase class-4/guanylyl cyclase family. In terms of assembly, homooligomer. May interact with NPR1/GC-A. In terms of processing, N-glycosylated. Expressed in lung, kidney and skeletal muscle. Low levels in intestine.

The protein resides in the cell membrane. It is found in the cytoplasm. The enzyme catalyses GTP = 3',5'-cyclic GMP + diphosphate. The polypeptide is Guanylate cyclase 2G (Gucy2g) (Rattus norvegicus (Rat)).